A 376-amino-acid polypeptide reads, in one-letter code: Probable tRNA sulfurtransferase (376 aa).

The THUMP domain occupies 51–152 (EENLKNLKYV…KNSVYVFDKS (102 aa)). ATP is bound by residues 170–171 (LI), 195–196 (TF), Arg-252, Gly-274, and Gln-283.

It belongs to the ThiI family.

The protein localises to the cytoplasm. It carries out the reaction [ThiI sulfur-carrier protein]-S-sulfanyl-L-cysteine + a uridine in tRNA + 2 reduced [2Fe-2S]-[ferredoxin] + ATP + H(+) = [ThiI sulfur-carrier protein]-L-cysteine + a 4-thiouridine in tRNA + 2 oxidized [2Fe-2S]-[ferredoxin] + AMP + diphosphate. The catalysed reaction is [ThiS sulfur-carrier protein]-C-terminal Gly-Gly-AMP + S-sulfanyl-L-cysteinyl-[cysteine desulfurase] + AH2 = [ThiS sulfur-carrier protein]-C-terminal-Gly-aminoethanethioate + L-cysteinyl-[cysteine desulfurase] + A + AMP + 2 H(+). Its pathway is cofactor biosynthesis; thiamine diphosphate biosynthesis. Catalyzes the ATP-dependent transfer of a sulfur to tRNA to produce 4-thiouridine in position 8 of tRNAs, which functions as a near-UV photosensor. Also catalyzes the transfer of sulfur to the sulfur carrier protein ThiS, forming ThiS-thiocarboxylate. This is a step in the synthesis of thiazole, in the thiamine biosynthesis pathway. The sulfur is donated as persulfide by IscS. This chain is Probable tRNA sulfurtransferase, found in Mycoplasmopsis synoviae (strain 53) (Mycoplasma synoviae).